We begin with the raw amino-acid sequence, 520 residues long: Amine oxidase [flavin-containing] B (520 aa).

Residues 1 to 489 (MNSKCDVVVV…TFLERHLPSV (489 aa)) are Cytoplasmic-facing. Residue K52 is modified to N6-acetyllysine. The residue at position 397 (C397) is an S-8alpha-FAD cysteine. The chain crosses the membrane as a helical; Anchor for type IV membrane protein span at residues 490 to 516 (PGLLRLIRLTTVVSAVALGFLAQKRGL). Residues 517 to 520 (LLRI) lie on the Mitochondrial intermembrane side of the membrane.

The protein belongs to the flavin monoamine oxidase family. As to quaternary structure, monomer, homo- or heterodimer (containing two subunits of similar size). Each subunit contains a covalently bound flavin. Enzymatically active as monomer. FAD is required as a cofactor.

It localises to the mitochondrion outer membrane. It carries out the reaction a secondary aliphatic amine + O2 + H2O = a primary amine + an aldehyde + H2O2. It catalyses the reaction (R)-adrenaline + O2 + H2O = (R)-3,4-dihydroxymandelaldehyde + methylamine + H2O2. The enzyme catalyses a primary methyl amine + O2 + H2O = an aldehyde + H2O2 + NH4(+). The catalysed reaction is benzylamine + O2 + H2O = benzaldehyde + H2O2 + NH4(+). It carries out the reaction dopamine + O2 + H2O = 3,4-dihydroxyphenylacetaldehyde + H2O2 + NH4(+). It catalyses the reaction tyramine + O2 + H2O = (4-hydroxyphenyl)acetaldehyde + H2O2 + NH4(+). The enzyme catalyses (R)-noradrenaline + O2 + H2O = (R)-3,4-dihydroxymandelaldehyde + H2O2 + NH4(+). The catalysed reaction is 2-phenylethylamine + O2 + H2O = 2-phenylacetaldehyde + H2O2 + NH4(+). It carries out the reaction N-acetylputrescine + O2 + H2O = 4-acetamidobutanal + H2O2 + NH4(+). In terms of biological role, catalyzes the oxidative deamination of primary and some secondary amines such as neurotransmitters, and exogenous amines including the tertiary amine, neurotoxin 1-methyl-4-phenyl-1,2,3,6-tetrahydropyridine (MPTP), with concomitant reduction of oxygen to hydrogen peroxide and participates in the metabolism of neuroactive and vasoactive amines in the central nervous system and peripheral tissues. Preferentially degrades benzylamine and phenylethylamine. This chain is Amine oxidase [flavin-containing] B, found in Cavia porcellus (Guinea pig).